The chain runs to 25 residues: Large ribosomal subunit protein uL30 (25 aa).

This sequence belongs to the universal ribosomal protein uL30 family. In terms of assembly, part of the 50S ribosomal subunit.

In Pseudomonas fluorescens biotype A, this protein is Large ribosomal subunit protein uL30 (rpmD).